The sequence spans 59 residues: UPF0181 protein CKO_01169 (59 aa).

This sequence belongs to the UPF0181 family.

This Citrobacter koseri (strain ATCC BAA-895 / CDC 4225-83 / SGSC4696) protein is UPF0181 protein CKO_01169.